A 99-amino-acid polypeptide reads, in one-letter code: uncharacterized protein (99 aa).

Positions 1-17 (MMMNAFFPAMALMVLVG) are cleaved as a signal peptide. Residue cysteine 18 is the site of N-palmitoyl cysteine attachment. The S-diacylglycerol cysteine moiety is linked to residue cysteine 18.

The protein resides in the cell membrane. This is an uncharacterized protein from Shigella boydii serotype 4 (strain Sb227).